The chain runs to 286 residues: ATP synthase gamma chain (286 aa).

This sequence belongs to the ATPase gamma chain family. As to quaternary structure, F-type ATPases have 2 components, CF(1) - the catalytic core - and CF(0) - the membrane proton channel. CF(1) has five subunits: alpha(3), beta(3), gamma(1), delta(1), epsilon(1). CF(0) has three main subunits: a, b and c.

The protein resides in the cell inner membrane. In terms of biological role, produces ATP from ADP in the presence of a proton gradient across the membrane. The gamma chain is believed to be important in regulating ATPase activity and the flow of protons through the CF(0) complex. The sequence is that of ATP synthase gamma chain from Shewanella putrefaciens (strain CN-32 / ATCC BAA-453).